The sequence spans 85 residues: Dr hemagglutinin AFA-III operon regulatory protein AfaF (85 aa).

It to E.coli PapI and DaaF.

Its function is as follows. May have a possible regulatory function on the expression of the other AFA-III genes. This Escherichia coli protein is Dr hemagglutinin AFA-III operon regulatory protein AfaF (afaF).